The following is a 378-amino-acid chain: Erythronate-4-phosphate dehydrogenase (378 aa).

Substrate-binding residues include Ser45 and Thr66. 2 residues coordinate NAD(+): Asp142 and Thr169. Arg202 is an active-site residue. Asp226 provides a ligand contact to NAD(+). Residue Glu231 is part of the active site. His248 functions as the Proton donor in the catalytic mechanism. An NAD(+)-binding site is contributed by Gly251. Tyr252 contacts substrate.

This sequence belongs to the D-isomer specific 2-hydroxyacid dehydrogenase family. PdxB subfamily. As to quaternary structure, homodimer.

The protein resides in the cytoplasm. The catalysed reaction is 4-phospho-D-erythronate + NAD(+) = (R)-3-hydroxy-2-oxo-4-phosphooxybutanoate + NADH + H(+). Its pathway is cofactor biosynthesis; pyridoxine 5'-phosphate biosynthesis; pyridoxine 5'-phosphate from D-erythrose 4-phosphate: step 2/5. Functionally, catalyzes the oxidation of erythronate-4-phosphate to 3-hydroxy-2-oxo-4-phosphonooxybutanoate. This chain is Erythronate-4-phosphate dehydrogenase, found in Cellvibrio japonicus (strain Ueda107) (Pseudomonas fluorescens subsp. cellulosa).